We begin with the raw amino-acid sequence, 360 residues long: G-protein coupled receptor 183 (360 aa).

The Extracellular portion of the chain corresponds to 1 to 30 (MDIKMDNFTTPSAASLESDCDLYAHHHTAR). A glycan (N-linked (GlcNAc...) asparagine) is linked at N7. A helical membrane pass occupies residues 31–56 (ILMPLHYSIVFIIGLVGNLLALIVII). The Cytoplasmic segment spans residues 57 to 76 (QNRKKINSTTLYSTNLVISD). Residues 77–94 (ILFTTALPTRIAYYALGF) form a helical membrane-spanning segment. R86 is a 7alpha,25-dihydroxycholesterol binding site. The Extracellular portion of the chain corresponds to 95–104 (DWRIGDALCR). C103 and C180 form a disulfide bridge. A helical membrane pass occupies residues 105–126 (ITALVFYINTYAGVNFMTCLSI). Residues Y111 and Y115 each coordinate 7alpha,25-dihydroxycholesterol. Residues 125–133 (SIDRFFAVV) are interaction with G proteins. At 127 to 148 (DRFFAVVHPLRYNKIKRIEHAK) the chain is on the cytoplasmic side. The chain crosses the membrane as a helical span at residues 149 to 167 (CICIFVWILVFGQTLPLLI). At 168 to 191 (NPMSKQEAERTTCMEYPNFEETKS) the chain is on the extracellular side. The helical transmembrane segment at 192–214 (LPWILLGACFIGYVLPLVIILIC) threads the bilayer. The Cytoplasmic portion of the chain corresponds to 215 to 240 (YSQICCKLFKTAKQNPLTEKSGVNKK). Residues 241 to 264 (ALNTIIFIIVVFVVCFTPYHVAII) form a helical membrane-spanning segment. Y259 is a 7alpha,25-dihydroxycholesterol binding site. At 265-286 (QHMIKKLRLPGLLECSQRHSFQ) the chain is on the extracellular side. The chain crosses the membrane as a helical span at residues 287 to 311 (ISLHFTVCLMNFNCCMDPFIYFFAC). The Cytoplasmic portion of the chain corresponds to 312–360 (KGYKRKVMKMLKRQVSVSISSAVRSAPEENSREMTETQMMIHSKSLNGK). S327 carries the phosphoserine modification. Residues 339–360 (EENSREMTETQMMIHSKSLNGK) are disordered. The span at 347–360 (ETQMMIHSKSLNGK) shows a compositional bias: polar residues.

It belongs to the G-protein coupled receptor 1 family. As to quaternary structure, homodimer and heterodimer. Heterodimerizes with CXCR5; leading to modulate the interaction between of CXCL13 and CXCR5.

It is found in the cell membrane. Functionally, G-protein coupled receptor expressed in lymphocytes that acts as a chemotactic receptor for B-cells, T-cells, splenic dendritic cells, monocytes/macrophages and astrocytes. Receptor for oxysterol 7-alpha,25-dihydroxycholesterol (7-alpha,25-OHC) and other related oxysterols. Mediates cell positioning and movement of a number of cells by binding the 7-alpha,25-OHC ligand that forms a chemotactic gradient. Binding of 7-alpha,25-OHC mediates the correct localization of B-cells during humoral immune responses. Guides B-cell movement along the B-cell zone-T-cell zone boundary and later to interfollicular and outer follicular regions. Its specific expression during B-cell maturation helps position B-cells appropriately for mounting T-dependent antibody responses. Collaborates with CXCR5 to mediate B-cell migration; probably by forming a heterodimer with CXCR5 that affects the interaction between of CXCL13 and CXCR5. Also acts as a chemotactic receptor for some T-cells upon binding to 7-alpha,25-OHC ligand. Promotes follicular helper T (Tfh) cells differentiation by positioning activated T-cells at the follicle-T-zone interface, promoting contact of newly activated CD4 T-cells with activated dendritic cells and exposing them to Tfh-cell-promoting inducible costimulator (ICOS) ligand. Expression in splenic dendritic cells is required for their homeostasis, localization and ability to induce B- and T-cell responses: GPR183 acts as a chemotactic receptor in dendritic cells that mediates the accumulation of CD4(+) dendritic cells in bridging channels. Regulates migration of astrocytes and is involved in communication between astrocytes and macrophages. Promotes osteoclast precursor migration to bone surfaces. Signals constitutively through G(i)-alpha, but not G(s)-alpha or G(q)-alpha. Signals constitutively also via MAPK1/3 (ERK1/2). In Bos taurus (Bovine), this protein is G-protein coupled receptor 183 (GPR183).